The primary structure comprises 426 residues: D-tagatose-1,6-bisphosphate aldolase subunit KbaZ (426 aa).

The protein belongs to the GatZ/KbaZ family. KbaZ subfamily. In terms of assembly, forms a complex with KbaY.

It functions in the pathway carbohydrate metabolism; D-tagatose 6-phosphate degradation; D-glyceraldehyde 3-phosphate and glycerone phosphate from D-tagatose 6-phosphate: step 2/2. Functionally, component of the tagatose-1,6-bisphosphate aldolase KbaYZ that is required for full activity and stability of the Y subunit. Could have a chaperone-like function for the proper and stable folding of KbaY. When expressed alone, KbaZ does not show any aldolase activity. The sequence is that of D-tagatose-1,6-bisphosphate aldolase subunit KbaZ from Escherichia coli O139:H28 (strain E24377A / ETEC).